The sequence spans 213 residues: Triosephosphate isomerase (213 aa).

Residue 7-9 (NLK) coordinates substrate. His-88 acts as the Electrophile in catalysis. Glu-136 functions as the Proton acceptor in the catalytic mechanism. Substrate-binding residues include Ile-141 and Gly-174.

It belongs to the triosephosphate isomerase family. In terms of assembly, homotetramer; dimer of dimers.

The protein resides in the cytoplasm. The catalysed reaction is D-glyceraldehyde 3-phosphate = dihydroxyacetone phosphate. It participates in carbohydrate biosynthesis; gluconeogenesis. Its pathway is carbohydrate degradation; glycolysis; D-glyceraldehyde 3-phosphate from glycerone phosphate: step 1/1. In terms of biological role, involved in the gluconeogenesis. Catalyzes stereospecifically the conversion of dihydroxyacetone phosphate (DHAP) to D-glyceraldehyde-3-phosphate (G3P). This chain is Triosephosphate isomerase, found in Thermoplasma volcanium (strain ATCC 51530 / DSM 4299 / JCM 9571 / NBRC 15438 / GSS1).